The primary structure comprises 404 residues: Acyl-[acyl-carrier-protein] desaturase 7, chloroplastic (404 aa).

A chloroplast-targeting transit peptide spans 1–39 (MAASATTSTLAVTMFGYPNRNCHLKPPATATLRFWRSAA). Positions 138, 176, 179, 229, 262, and 265 each coordinate Fe cation.

Belongs to the fatty acid desaturase type 2 family. As to quaternary structure, homodimer. Requires Fe(2+) as cofactor.

The protein localises to the plastid. It localises to the chloroplast. It participates in lipid metabolism; fatty acid metabolism. In terms of biological role, introduces a cis double bond in the acyl chain of an acyl-[acyl-carrier protein]. In Oryza sativa subsp. indica (Rice), this protein is Acyl-[acyl-carrier-protein] desaturase 7, chloroplastic.